The following is a 436-amino-acid chain: Hydrogenobyrinate a,c-diamide synthase (436 aa).

Residues 244 to 435 (RIAVARDDAF…MHVIDFSGEA (192 aa)) form the GATase cobBQ-type domain. Residue Cys327 is the Nucleophile of the active site.

Belongs to the CobB/CbiA family. Requires Mg(2+) as cofactor.

It catalyses the reaction hydrogenobyrinate + 2 L-glutamine + 2 ATP + 2 H2O = hydrogenobyrinate a,c-diamide + 2 L-glutamate + 2 ADP + 2 phosphate + 2 H(+). The protein operates within cofactor biosynthesis; adenosylcobalamin biosynthesis; cob(II)yrinate a,c-diamide from precorrin-2 (aerobic route): step 9/10. In terms of biological role, catalyzes the ATP-dependent amidation of the two carboxylate groups at positions a and c of hydrogenobyrinate, using either L-glutamine or ammonia as the nitrogen source. The polypeptide is Hydrogenobyrinate a,c-diamide synthase (Brucella ovis (strain ATCC 25840 / 63/290 / NCTC 10512)).